A 432-amino-acid polypeptide reads, in one-letter code: Adenylosuccinate synthetase (432 aa).

GTP contacts are provided by residues 12 to 18 and 40 to 42; these read GDEGKGK and GHT. Catalysis depends on Asp-13, which acts as the Proton acceptor. The Mg(2+) site is built by Asp-13 and Gly-40. Residues 13–16, 38–41, Thr-130, Arg-144, Gln-225, Thr-240, and Arg-304 each bind IMP; these read DEGK and NAGH. Catalysis depends on His-41, which acts as the Proton donor. Substrate is bound at residue 300-306; that stretch reads STTGRPR. Residues Arg-306, 332–334, and 414–416 each bind GTP; these read KLD and SVG.

This sequence belongs to the adenylosuccinate synthetase family. In terms of assembly, homodimer. Requires Mg(2+) as cofactor.

The protein resides in the cytoplasm. It carries out the reaction IMP + L-aspartate + GTP = N(6)-(1,2-dicarboxyethyl)-AMP + GDP + phosphate + 2 H(+). The protein operates within purine metabolism; AMP biosynthesis via de novo pathway; AMP from IMP: step 1/2. Plays an important role in the de novo pathway of purine nucleotide biosynthesis. Catalyzes the first committed step in the biosynthesis of AMP from IMP. This chain is Adenylosuccinate synthetase, found in Citrifermentans bemidjiense (strain ATCC BAA-1014 / DSM 16622 / JCM 12645 / Bem) (Geobacter bemidjiensis).